Here is a 154-residue protein sequence, read N- to C-terminus: Putative pre-16S rRNA nuclease (154 aa).

This sequence belongs to the YqgF nuclease family.

It localises to the cytoplasm. In terms of biological role, could be a nuclease involved in processing of the 5'-end of pre-16S rRNA. The polypeptide is Putative pre-16S rRNA nuclease (Rickettsia peacockii (strain Rustic)).